Consider the following 172-residue polypeptide: Small ribosomal subunit protein uS5 (172 aa).

Positions 17-80 (LKEKMIAINR…EEARRNMTKV (64 aa)) constitute an S5 DRBM domain.

Belongs to the universal ribosomal protein uS5 family. As to quaternary structure, part of the 30S ribosomal subunit. Contacts proteins S4 and S8.

Functionally, with S4 and S12 plays an important role in translational accuracy. Its function is as follows. Located at the back of the 30S subunit body where it stabilizes the conformation of the head with respect to the body. The chain is Small ribosomal subunit protein uS5 from Polaromonas naphthalenivorans (strain CJ2).